The primary structure comprises 369 residues: Cellular tumor antigen p53 (369 aa).

The transcription activation (acidic) stretch occupies residues 1–28; it reads MAESQEFAELWERNLISTQEAGTCWELI. A DNA-binding region spans residues 66-256; that stretch reads DYPGEHGFKL…KTEESNFRKD (191 aa). Zn(2+) contacts are provided by Cys-140, His-143, Cys-202, and Cys-206. Residues 237–244 are interaction with DNA; the sequence is RVCACPGR. Residues 246–263 are compositionally biased toward basic and acidic residues; it reads RKTEESNFRKDQETKTLD. Disordered stretches follow at residues 246–296 and 318–369; these read RKTE…SGSS and NDSL…SDSD. Over residues 269–281 the composition is skewed to polar residues; that stretch reads NKRSLTKDSTSSV. Residues 270–289 carry the Bipartite nuclear localization signal motif; the sequence is KRSLTKDSTSSVPRPEGSKK. The interval 298–329 is oligomerization; sequence EEIYTLQVRGKERYEMLKKINDSLELSDVVPP. The short motif at 312 to 323 is the Nuclear export signal element; that stretch reads EMLKKINDSLEL. The interval 342–365 is basic (repression of DNA-binding); sequence KGKKKDGQTPEPKRGKKLMVKDEK. Residues 346–369 show a composition bias toward basic and acidic residues; sequence KDGQTPEPKRGKKLMVKDEKSDSD.

This sequence belongs to the p53 family. In terms of assembly, binds DNA as a homotetramer. It depends on Zn(2+) as a cofactor.

The protein resides in the cytoplasm. It localises to the nucleus. Its function is as follows. Multifunctional transcription factor that induces cell cycle arrest, DNA repair or apoptosis upon binding to its target DNA sequence. Acts as a tumor suppressor in many tumor types; induces growth arrest or apoptosis depending on the physiological circumstances and cell type. Negatively regulates cell division by controlling expression of a set of genes required for this process. One of the activated genes is an inhibitor of cyclin-dependent kinases. Apoptosis induction seems to be mediated either by stimulation of BAX and FAS antigen expression, or by repression of Bcl-2 expression. The polypeptide is Cellular tumor antigen p53 (tp53) (Barbus barbus (Barbel)).